A 288-amino-acid chain; its full sequence is Geranylgeranyl diphosphate synthase (288 aa).

Isopentenyl diphosphate is bound by residues R43 and H73. Mg(2+)-binding residues include D80 and D86. R91 is a binding site for (2E,6E)-farnesyl diphosphate. Residue R92 participates in isopentenyl diphosphate binding. 3 residues coordinate (2E,6E)-farnesyl diphosphate: K170, T171, and Q205.

Belongs to the FPP/GGPP synthase family. Requires Mg(2+) as cofactor.

It carries out the reaction isopentenyl diphosphate + (2E,6E)-farnesyl diphosphate = (2E,6E,10E)-geranylgeranyl diphosphate + diphosphate. It participates in isoprenoid biosynthesis; geranylgeranyl diphosphate biosynthesis; geranylgeranyl diphosphate from farnesyl diphosphate and isopentenyl diphosphate: step 1/1. Its function is as follows. Catalyzes the condensation of farnesyl diphosphate (FPP) and isopentenyl diphosphate (IPP) to yield geranylgeranyl diphosphate (GGPP) needed for biosynthesis of carotenoids and diterpenes. This is Geranylgeranyl diphosphate synthase (crtE) from Cereibacter sphaeroides (strain ATCC 17023 / DSM 158 / JCM 6121 / CCUG 31486 / LMG 2827 / NBRC 12203 / NCIMB 8253 / ATH 2.4.1.) (Rhodobacter sphaeroides).